The sequence spans 1074 residues: Semaphorin-5A (1074 aa).

A signal peptide spans 1–22 (MKGTCVIAWLFSSLGLWRLAHP). Over 23–968 (EAQGTTQCQR…EEKRCGEFNM (946 aa)) the chain is Extracellular. In terms of domain architecture, Sema spans 35–484 (HPVISYKEIG…LREHVVKIPL (450 aa)). Intrachain disulfides connect cysteine 104/cysteine 114 and cysteine 131/cysteine 140. 4 N-linked (GlcNAc...) asparagine glycosylation sites follow: asparagine 142, asparagine 168, asparagine 227, and asparagine 277. Disulfide bonds link cysteine 254/cysteine 357 and cysteine 278/cysteine 320. Asparagine 323, asparagine 367, and asparagine 437 each carry an N-linked (GlcNAc...) asparagine glycan. Disulfide bonds link cysteine 487/cysteine 504 and cysteine 496/cysteine 513. N-linked (GlcNAc...) asparagine glycosylation is found at asparagine 536 and asparagine 591. TSP type-1 domains are found at residues 540 to 593 (DGHF…ANCS), 595 to 651 (NGGW…LLCP), 653 to 702 (HMFW…NPCP), 707 to 765 (TTPW…GCST), 784 to 839 (NGAW…LPCP), 841 to 896 (DGVW…QPCP), and 897 to 944 (ESWS…VFDS). 6 disulfide bridges follow: cysteine 607–cysteine 644, cysteine 611–cysteine 650, cysteine 622–cysteine 634, cysteine 665–cysteine 696, cysteine 669–cysteine 701, and cysteine 680–cysteine 686. Asparagine 717 carries an N-linked (GlcNAc...) asparagine glycan. Intrachain disulfides connect cysteine 796/cysteine 833, cysteine 800/cysteine 838, cysteine 811/cysteine 823, cysteine 853/cysteine 890, cysteine 857/cysteine 895, and cysteine 868/cysteine 880. Asparagine 933 is a glycosylation site (N-linked (GlcNAc...) asparagine). A helical transmembrane segment spans residues 969–989 (FHMIAVGLSSSILGCLLTLLV). Residues 990–1074 (YTYCQRYQQQ…FTDLNNYDEY (85 aa)) lie on the Cytoplasmic side of the membrane.

It belongs to the semaphorin family. Binds PLXNB3.

The protein resides in the membrane. Its function is as follows. Bifunctional axonal guidance cue regulated by sulfated proteoglycans; attractive effects result from interactions with heparan sulfate proteoglycans (HSPGs), while the inhibitory effects depend on interactions with chondroitin sulfate proteoglycans (CSPGs). Ligand for receptor PLXNB3. In glioma cells, SEMA5A stimulation of PLXNB3 results in the disassembly of F-actin stress fibers, disruption of focal adhesions and cellular collapse as well as inhibition of cell migration and invasion through ARHGDIA-mediated inactivation of RAC1. May promote angiogenesis by increasing endothelial cell proliferation and migration and inhibiting apoptosis. The chain is Semaphorin-5A (SEMA5A) from Homo sapiens (Human).